A 267-amino-acid chain; its full sequence is Hydroxyethylthiazole kinase (267 aa).

Met-51 contributes to the substrate binding site. Positions 127 and 173 each coordinate ATP. Residue Ala-200 coordinates substrate.

It belongs to the Thz kinase family. Mg(2+) serves as cofactor.

It carries out the reaction 5-(2-hydroxyethyl)-4-methylthiazole + ATP = 4-methyl-5-(2-phosphooxyethyl)-thiazole + ADP + H(+). It functions in the pathway cofactor biosynthesis; thiamine diphosphate biosynthesis; 4-methyl-5-(2-phosphoethyl)-thiazole from 5-(2-hydroxyethyl)-4-methylthiazole: step 1/1. Its function is as follows. Catalyzes the phosphorylation of the hydroxyl group of 4-methyl-5-beta-hydroxyethylthiazole (THZ). The sequence is that of Hydroxyethylthiazole kinase from Psychromonas ingrahamii (strain DSM 17664 / CCUG 51855 / 37).